We begin with the raw amino-acid sequence, 347 residues long: Protein YIPF1 homolog (347 aa).

A disordered region spans residues 1–115; it reads MSNYNNKHHD…FSDNVPLNTN (115 aa). Residues 1–166 are Cytoplasmic-facing; sequence MSNYNNKHHD…FFNLIRENPD (166 aa). Residues 34–47 show a composition bias toward polar residues; the sequence is NLFPNTNIDYNDYT. Composition is skewed to low complexity over residues 48-67 and 76-104; these read QNRG…LQFQ and NSNT…SSNN. Positions 105 to 115 are enriched in polar residues; sequence KFSDNVPLNTN. A helical membrane pass occupies residues 167-187; sequence LYGPFWVLTSLVFIVAVTSNL. Topologically, residues 188–207 are lumenal; the sequence is NEYFHSSDHKSWEVDIQKIV. Residues 208–228 form a helical membrane-spanning segment; that stretch reads YSAITIYGYSFVIPLILWGIF. Residues 229-232 are Cytoplasmic-facing; the sequence is KWMN. The chain crosses the membrane as a helical span at residues 233-253; the sequence is LGLRLLDMLCIYGYTLFIFVP. At 254-255 the chain is on the lumenal side; the sequence is AS. A helical membrane pass occupies residues 256–276; it reads ILCVIPLQLVQWIIVAIASIV. The Cytoplasmic segment spans residues 277–296; sequence SGLFLVTNIFTPLKEDFTKR. The chain crosses the membrane as a helical span at residues 297-317; that stretch reads GLIICAVIGALHIGLALVLKL. Over 318–347 the chain is Lumenal; that stretch reads YFFANSTENFTISDSSSTPTPTPTNTTKLL. Residues Asn322, Asn326, and Asn342 are each glycosylated (N-linked (GlcNAc...) asparagine).

It belongs to the YIP1 family.

The protein resides in the golgi apparatus. It localises to the cis-Golgi network membrane. Its subcellular location is the trans-Golgi network membrane. The protein localises to the late endosome membrane. In Dictyostelium discoideum (Social amoeba), this protein is Protein YIPF1 homolog (yipf1).